The sequence spans 93 residues: UPF0369 protein RC0209 (93 aa).

A disordered region spans residues 1-24 (MDDKKDNRHLSKPAYREECTGDTE). The 48-residue stretch at 8–55 (RHLSKPAYREECTGDTERSTTAYMDILEDVSTGSTSKLPLEAKFVKIS) folds into the RPE1 insert domain.

Belongs to the SDHAF4 family.

This Rickettsia conorii (strain ATCC VR-613 / Malish 7) protein is UPF0369 protein RC0209.